The following is an 83-amino-acid chain: Sulfur carrier protein TusA (83 aa).

Residue Cys-19 is the Cysteine persulfide intermediate of the active site.

The protein belongs to the sulfur carrier protein TusA family.

It localises to the cytoplasm. Its function is as follows. Sulfur carrier protein which probably makes part of a sulfur-relay system. The chain is Sulfur carrier protein TusA from Aliivibrio fischeri (strain ATCC 700601 / ES114) (Vibrio fischeri).